We begin with the raw amino-acid sequence, 210 residues long: Glycerol-3-phosphate acyltransferase (210 aa).

Helical transmembrane passes span 8-28, 56-76, 87-107, 119-139, 144-164, and 165-185; these read LILLSLVSYVIGSIPFGLLLT, GLAAATLLLDALKGALAVLIA, TMAVAAVAVVIGHCFPVWLGF, TIWVLCWPVGLACCVVWLLVA, ISSAGALAAFLLAPGLMVLLS, and GRPLHTPIPVATLLISLLIWA.

This sequence belongs to the PlsY family. Probably interacts with PlsX.

It is found in the cell inner membrane. It carries out the reaction an acyl phosphate + sn-glycerol 3-phosphate = a 1-acyl-sn-glycero-3-phosphate + phosphate. It participates in lipid metabolism; phospholipid metabolism. Functionally, catalyzes the transfer of an acyl group from acyl-phosphate (acyl-PO(4)) to glycerol-3-phosphate (G3P) to form lysophosphatidic acid (LPA). This enzyme utilizes acyl-phosphate as fatty acyl donor, but not acyl-CoA or acyl-ACP. This is Glycerol-3-phosphate acyltransferase from Gluconobacter oxydans (strain 621H) (Gluconobacter suboxydans).